The chain runs to 212 residues: HTH-type transcriptional repressor KstR (212 aa).

The segment covering 1–11 (MTTSSRSRSST) has biased composition (low complexity). The tract at residues 1-28 (MTTSSRSRSSTVAAATLGEDDLSSNAQK) is disordered. Residues 28–88 (KERRKRILDA…SALAREFERI (61 aa)) form the HTH tetR-type domain. Residues 51 to 70 (QMRAVAERADVAVGTLYRYF) constitute a DNA-binding region (H-T-H motif).

In terms of assembly, homodimer.

Controls the expression of genes used for utilizing diverse lipids as energy sources. In Rhodococcus jostii (strain RHA1), this protein is HTH-type transcriptional repressor KstR (kstR).